The following is a 172-amino-acid chain: Ubiquitin-conjugating enzyme E2 PEX4 (172 aa).

The UBC core domain maps to 14 to 167; it reads SASKRLIKEL…VELWCQDSDS (154 aa). The active-site Glycyl thioester intermediate is C104.

This sequence belongs to the ubiquitin-conjugating enzyme family.

The enzyme catalyses S-ubiquitinyl-[E1 ubiquitin-activating enzyme]-L-cysteine + [E2 ubiquitin-conjugating enzyme]-L-cysteine = [E1 ubiquitin-activating enzyme]-L-cysteine + S-ubiquitinyl-[E2 ubiquitin-conjugating enzyme]-L-cysteine.. It functions in the pathway protein modification; protein ubiquitination. Ubiquitin-conjugating enzyme E2 that is essential for peroxisome biogenesis and plays a key role in development, pathogenicity, and cell wall integrity. Required for long and very long-chain fatty acid utilization and is involved in lipid droplet accumulation and the elimination of reactive oxygen species. Controls the expression of proteins involved in protein biosynthesis, fatty acid metabolism, cell wall synthesis, oxidation-reduction reactions, as well as of the enzymes involved in the biosynthesis of the mycotoxin deoxynivalenol (DON), including TRI5, TRI6, and TRI10. The polypeptide is Ubiquitin-conjugating enzyme E2 PEX4 (Gibberella zeae (strain ATCC MYA-4620 / CBS 123657 / FGSC 9075 / NRRL 31084 / PH-1) (Wheat head blight fungus)).